The following is a 164-amino-acid chain: Phosphopantetheine adenylyltransferase (164 aa).

Serine 9 lines the substrate pocket. ATP is bound by residues 9-10 (SF) and histidine 17. Residues lysine 41, leucine 74, and arginine 88 each coordinate substrate. ATP-binding positions include 89–91 (GIR), glutamate 99, and 124–130 (YAEVSST).

The protein belongs to the bacterial CoaD family. As to quaternary structure, homohexamer. Requires Mg(2+) as cofactor.

The protein resides in the cytoplasm. The catalysed reaction is (R)-4'-phosphopantetheine + ATP + H(+) = 3'-dephospho-CoA + diphosphate. The protein operates within cofactor biosynthesis; coenzyme A biosynthesis; CoA from (R)-pantothenate: step 4/5. In terms of biological role, reversibly transfers an adenylyl group from ATP to 4'-phosphopantetheine, yielding dephospho-CoA (dPCoA) and pyrophosphate. In Chromobacterium violaceum (strain ATCC 12472 / DSM 30191 / JCM 1249 / CCUG 213 / NBRC 12614 / NCIMB 9131 / NCTC 9757 / MK), this protein is Phosphopantetheine adenylyltransferase.